The following is a 547-amino-acid chain: T-complex protein 1 subunit alpha (547 aa).

This sequence belongs to the TCP-1 chaperonin family. As to quaternary structure, heterooligomeric complex of about 850 to 900 kDa that forms two stacked rings, 12 to 16 nm in diameter.

It localises to the cytoplasm. In terms of biological role, molecular chaperone; assists the folding of proteins upon ATP hydrolysis. Known to play a role, in vitro, in the folding of actin and tubulin. This Tetrahymena pyriformis protein is T-complex protein 1 subunit alpha.